We begin with the raw amino-acid sequence, 300 residues long: N-acetylmuramic acid 6-phosphate etherase 1 (300 aa).

In terms of domain architecture, SIS spans 59 to 222 (AAERFKKGGR…STGIMVKVGN (164 aa)). E87 acts as the Proton donor in catalysis. E118 is a catalytic residue.

This sequence belongs to the GCKR-like family. MurNAc-6-P etherase subfamily. Homodimer.

It carries out the reaction N-acetyl-D-muramate 6-phosphate + H2O = N-acetyl-D-glucosamine 6-phosphate + (R)-lactate. It participates in amino-sugar metabolism; N-acetylmuramate degradation. In terms of biological role, specifically catalyzes the cleavage of the D-lactyl ether substituent of MurNAc 6-phosphate, producing GlcNAc 6-phosphate and D-lactate. The chain is N-acetylmuramic acid 6-phosphate etherase 1 from Enterococcus faecalis (strain ATCC 700802 / V583).